The chain runs to 426 residues: Trophoblast glycoprotein (426 aa).

An N-terminal signal peptide occupies residues 1 to 31 (MPGAGSRGPSAGDGRLRLARLALVLLGWVSA). Residues 32–361 (SAPSSSVPSS…AVLPQSLQTS (330 aa)) are Extracellular-facing. The segment covering 33–47 (APSSSVPSSSTSPAA) has biased composition (low complexity). Positions 33–53 (APSSSVPSSSTSPAAFLASGS) are disordered. In terms of domain architecture, LRRNT spans 53 to 91 (SAQPPPAERCPAACECSEAARTVKCVNRNLLEVPADLPP). Disulfide bonds link Cys62-Cys68 and Cys66-Cys77. LRR repeat units follow at residues 92–113 (YVRN…AFAR), 116–139 (PLAD…GAFE), 141–163 (LPGL…FAFA), 172–210 (PSPL…AALR), 215–238 (LRGL…LLAQ), 239–261 (LPSL…ASFR), and 262–281 (NLTH…VLHN). N-linked (GlcNAc...) asparagine glycosylation is present at Asn124. Residue Asn281 is glycosylated (N-linked (GlcNAc...) asparagine). The region spanning 289-352 (GLAHVKVFLD…LNSSDLDCDA (64 aa)) is the LRRCT domain. Intrachain disulfides connect Cys304-Cys329 and Cys306-Cys350. A helical membrane pass occupies residues 362 to 382 (YVFLGIVLALIGAIFLLVLYL). Residues 383–426 (NRKGIKKWMHNIRDACRDHMEGYHYRYEINADPRLTNLSSNSDV) are Cytoplasmic-facing. Ser424 is modified (phosphoserine).

Post-translationally, highly glycosylated. Highly expressed in embryo and placenta. In adult, expressed only in brain and ovary. Not detected in kidney small intestine, heart, spleen, testis, liver, lung, thymus and stomach.

The protein resides in the cell membrane. May function as an inhibitor of Wnt/beta-catenin signaling by indirectly interacting with LRP6 and blocking Wnt3a-dependent LRP6 internalization. In Mus musculus (Mouse), this protein is Trophoblast glycoprotein (Tpbg).